We begin with the raw amino-acid sequence, 456 residues long: B-cell linker protein (456 aa).

The segment at 36–301 is disordered; that stretch reads IKKLKVKAPP…QSPVFPPAQK (266 aa). Residues 57 to 74 show a composition bias toward acidic residues; that stretch reads PADEEEQWSDDFDSDYEN. Residues Tyr-72, Tyr-84, Tyr-96, Tyr-178, and Tyr-189 each carry the phosphotyrosine; by SYK modification. Residues 173 to 187 show a composition bias toward acidic residues; it reads EDEADYVVPVEDNDE. Residues 212–226 show a composition bias toward low complexity; that stretch reads PNSSTPASPPGTASG. Pro residues predominate over residues 236–245; sequence SPPPAAPSPL. The segment covering 251 to 260 has biased composition (low complexity); that stretch reads KPTTPLKTTP. Positions 271-289 are enriched in basic and acidic residues; the sequence is CEEKPIPAERHRGSSHRQE. The region spanning 346–453 is the SH2 domain; sequence WYAGACDRKS…KDSTRLKYAV (108 aa).

Associates with PLCG1, VAV1 and NCK1 in a B-cell antigen receptor-dependent fashion. Interacts with VAV3, PLCG2 and GRB2. Interacts through its SH2 domain with CD79A. Interacts (via SH2 domain) with SYK; phosphorylated and activated by SYK. Interacts (via SH2 domain) with SCIMP; this interaction is dependent on phosphorylation of SCIMP 'Tyr-131'. Post-translationally, following BCR activation, phosphorylated on tyrosine residues by SYK and LYN. When phosphorylated, serves as a scaffold to assemble downstream targets of antigen activation, including PLCG1, VAV1, GRB2 and NCK1. Phosphorylation of Tyr-84, Tyr-178 and Tyr-189 facilitates PLCG1 binding. Phosphorylation of Tyr-96 facilitates BTK binding. Phosphorylation of Tyr-72 facilitates VAV1 and NCK1 binding. Phosphorylation is required for both Ca(2+) and MAPK signaling pathways. Expressed in B-cell lineage and fibroblast cell lines (at protein level). Highest levels of expression in the spleen, with lower levels in the liver, kidney, pancreas, small intestines and colon.

The protein localises to the cytoplasm. It is found in the cell membrane. Its function is as follows. Functions as a central linker protein, downstream of the B-cell receptor (BCR), bridging the SYK kinase to a multitude of signaling pathways and regulating biological outcomes of B-cell function and development. Plays a role in the activation of ERK/EPHB2, MAP kinase p38 and JNK. Modulates AP1 activation. Important for the activation of NF-kappa-B and NFAT. Plays an important role in BCR-mediated PLCG1 and PLCG2 activation and Ca(2+) mobilization and is required for trafficking of the BCR to late endosomes. However, does not seem to be required for pre-BCR-mediated activation of MAP kinase and phosphatidyl-inositol 3 (PI3) kinase signaling. May be required for the RAC1-JNK pathway. Plays a critical role in orchestrating the pro-B cell to pre-B cell transition. May play an important role in BCR-induced B-cell apoptosis. The chain is B-cell linker protein (BLNK) from Homo sapiens (Human).